Here is a 142-residue protein sequence, read N- to C-terminus: ATP synthase epsilon chain (142 aa).

This sequence belongs to the ATPase epsilon chain family. F-type ATPases have 2 components, CF(1) - the catalytic core - and CF(0) - the membrane proton channel. CF(1) has five subunits: alpha(3), beta(3), gamma(1), delta(1), epsilon(1). CF(0) has three main subunits: a, b and c.

It is found in the cell inner membrane. Produces ATP from ADP in the presence of a proton gradient across the membrane. In Pasteurella multocida (strain Pm70), this protein is ATP synthase epsilon chain.